The sequence spans 127 residues: UPF0166 protein PH1503 (127 aa).

It belongs to the UPF0166 family.

In Pyrococcus horikoshii (strain ATCC 700860 / DSM 12428 / JCM 9974 / NBRC 100139 / OT-3), this protein is UPF0166 protein PH1503.